We begin with the raw amino-acid sequence, 359 residues long: MKIAFIGEAVSGFGGMETVIRDVITTFRQQHIQSEMFFFCRNDKMDKGWLEGIKYSCSFSNIRLGFLRRAKHIHALSKWLQEYQPDIVICIDVISCLFAAKARKKSGIDMPVFSWPHFSLDHKKHAEYITCADYHLAISSGIKQQMINRGVAESTINVIFNPVETKDSVIPAPEEGETATFIYVGRMKFEGQKRVKDLLDGLSQAKGNWKLHVLGDGSDFEKCQAYGRELNIDDRIVWYGWQQYPWELVQQDIEKVSALLLTSSFEGFPMTLLEALSWGIPCISADCVSGPADIIQPDVNGHLYQPGDIAGFVTLLNKYIAGEIHIEHEKIPASIDEFYQSKYYDRLHKVIISAISRRK.

2 residues coordinate UDP: Gln242 and Glu274.

This sequence belongs to the glycosyltransferase group 1 family. Glycosyltransferase 4 subfamily.

The catalysed reaction is alpha-D-Glc-(1-&gt;3)-[L-alpha-D-Hep-(1-&gt;7)]-4-O-PO3(2-)-L-alpha-D-Hep-(1-&gt;3)-4-O-PO3(2-)-L-alpha-D-Hep-(1-&gt;5)-[alpha-Kdo-(2-&gt;4)]-alpha-Kdo-(2-&gt;6)-lipid A + UDP-alpha-D-galactose = alpha-D-Gal-(1-&gt;6)-alpha-D-Glc-(1-&gt;3)-[L-alpha-D-Hep-(1-&gt;7)]-4-O-PO3(2-)-L-alpha-D-Hep-(1-&gt;3)-4-O-PO3(2-)-L-alpha-D-Hep-(1-&gt;5)-[alpha-Kdo-(2-&gt;4)]-alpha-Kdo-(2-&gt;6)-lipid A + UDP + H(+). It participates in bacterial outer membrane biogenesis; LPS core biosynthesis. Its function is as follows. Galactosyltransferase involved in the biosynthesis of the core oligosaccharide region of lipopolysaccharide (LPS). Catalyzes the addition of galactose from UDP-galactose to the first glucose residue of the LPS outer core. Cannot use other sugar donors, such as UDP-glucose, UDP-glucuronic acid, UDP-galacuronic acid, GDP-mannose, ADP-glucose and GDP-glucose. In the absence of a lipid acceptor, can hydrolyze UDP-galactose to UDP and galactose. This chain is Lipopolysaccharide 1,6-galactosyltransferase, found in Escherichia coli (strain K12).